The sequence spans 54 residues: 2-aminomuconate deaminase (54 aa).

As to quaternary structure, homohexamer.

It catalyses the reaction (2Z,4E)-2-aminomuconate + H2O = (3E)-2-oxohex-3-enedioate + NH4(+). Its pathway is xenobiotic degradation; nitrobenzene degradation. Converts 2-aminomuconate to 4-oxalocrotonate, an intermediate step in the biodegradation of nitrobenzene. In Ectopseudomonas oleovorans (Pseudomonas oleovorans), this protein is 2-aminomuconate deaminase.